The sequence spans 963 residues: MAAPSELQLYPSVIHPAIQKYWDEFCELPAETLSAFSSYYPDILRAFAVSDFLALNILREPELVLSFLQSSQHQKECQLVDFRAPLAEELSGALKEDDLLRILRLFRRRMMFRIIWRDLVCLVDYQVTTREVSWLAETCIDEALSWIYRDMSQQFGEPHSTAGVKQQLVVLAMGKLGANELNVSSDIDLIFTFPERGETQGGNRSLDNQAFFTRLGQRLIQALDNTTADGFVFRVDMRLRPYGQSGALALSFAAMEAYYQEQGRDWERYAMIKARAVAGDIDAGEELLTSLKPFVYRKYIDFGAVQALRAMKEMIEREVQRKGQDGNIKVGRGGIREIEFIVQVFQLMRGGRDVRLQQRNLLSTLECLEDEGLLPVAAAAELREAYIFLRNLEHAIQGLEDKQTQEIPKDEEGRERVAVAMGFPGWGACRVQLDKYRDCVSEHFADIIAERREAPLERPDTIEWKALWAGRLAQDEAQDLLLRSGCDQAQEIYEAVTQLRQSSRVQHMQLQGKERLDEFMPNLLQSLAQSRASHETCRRLLALVEAVLRRSAYLALLNENPGALTELIRLFAESAWIARQIVTTPLLLDELLHSGSLYTPPDTTALRDELRQQMLRIPNDDLEEQMEALRYFKKAHVLRVAASDLRETLPLMKVSDYLTFIAETIIEQVVDEAWETMVKKYGEPGYEDAALNDMRFAVIGYGKLGGIEMSYGSDLDLVFLHGASGDLSTSGETSIANQVFFTRLGQRIIHLLTTKTASGDIYEVDMRLRPSGNSGLLVSSVSAFQQYQEKSAWTWEHQALVRSRAVAGCPGIRAEFEKVRKDILTQHRDPAKLRTEVMDMREKMHASLGTKPDSSGSPPYFDLKHDRGGIVDIEFMVQYAALRWANEYPQIVVWSDNIRILEALGDAGVFSQEDADKLCDIYRLLRAHGHRLALQNLPARIQTDELLEERRWVVAFWEKVFAE.

The interval M1 to R451 is adenylyl removase. Positions T461–E963 are adenylyl transferase.

The protein belongs to the GlnE family. Requires Mg(2+) as cofactor.

The catalysed reaction is [glutamine synthetase]-O(4)-(5'-adenylyl)-L-tyrosine + phosphate = [glutamine synthetase]-L-tyrosine + ADP. It carries out the reaction [glutamine synthetase]-L-tyrosine + ATP = [glutamine synthetase]-O(4)-(5'-adenylyl)-L-tyrosine + diphosphate. Its function is as follows. Involved in the regulation of glutamine synthetase GlnA, a key enzyme in the process to assimilate ammonia. When cellular nitrogen levels are high, the C-terminal adenylyl transferase (AT) inactivates GlnA by covalent transfer of an adenylyl group from ATP to specific tyrosine residue of GlnA, thus reducing its activity. Conversely, when nitrogen levels are low, the N-terminal adenylyl removase (AR) activates GlnA by removing the adenylyl group by phosphorolysis, increasing its activity. The regulatory region of GlnE binds the signal transduction protein PII (GlnB) which indicates the nitrogen status of the cell. The sequence is that of Bifunctional glutamine synthetase adenylyltransferase/adenylyl-removing enzyme from Hahella chejuensis (strain KCTC 2396).